The following is a 122-amino-acid chain: UPF0382 membrane protein SAB0533 (122 aa).

A run of 4 helical transmembrane segments spans residues 3–23 (LFII…AFGA), 46–66 (MYHG…SINV), 69–89 (AGWL…ILVL), and 98–118 (ITPI…IATF).

This sequence belongs to the UPF0382 family.

Its subcellular location is the cell membrane. This is UPF0382 membrane protein SAB0533 from Staphylococcus aureus (strain bovine RF122 / ET3-1).